Here is a 584-residue protein sequence, read N- to C-terminus: Arginine--tRNA ligase (584 aa).

Residues 127–137 (PNLAKEMHVGH) carry the 'HIGH' region motif.

This sequence belongs to the class-I aminoacyl-tRNA synthetase family. As to quaternary structure, monomer.

The protein localises to the cytoplasm. The enzyme catalyses tRNA(Arg) + L-arginine + ATP = L-arginyl-tRNA(Arg) + AMP + diphosphate. This chain is Arginine--tRNA ligase, found in Alcanivorax borkumensis (strain ATCC 700651 / DSM 11573 / NCIMB 13689 / SK2).